The following is a 355-amino-acid chain: UDP-N-acetylglucosamine--N-acetylmuramyl-(pentapeptide) pyrophosphoryl-undecaprenol N-acetylglucosamine transferase (355 aa).

Residues 12–14 (TGG), Asn-124, Arg-163, Ser-191, Ile-243, 262–267 (ALTVAE), and Gln-288 each bind UDP-N-acetyl-alpha-D-glucosamine.

It belongs to the glycosyltransferase 28 family. MurG subfamily.

The protein localises to the cell inner membrane. The catalysed reaction is di-trans,octa-cis-undecaprenyl diphospho-N-acetyl-alpha-D-muramoyl-L-alanyl-D-glutamyl-meso-2,6-diaminopimeloyl-D-alanyl-D-alanine + UDP-N-acetyl-alpha-D-glucosamine = di-trans,octa-cis-undecaprenyl diphospho-[N-acetyl-alpha-D-glucosaminyl-(1-&gt;4)]-N-acetyl-alpha-D-muramoyl-L-alanyl-D-glutamyl-meso-2,6-diaminopimeloyl-D-alanyl-D-alanine + UDP + H(+). Its pathway is cell wall biogenesis; peptidoglycan biosynthesis. In terms of biological role, cell wall formation. Catalyzes the transfer of a GlcNAc subunit on undecaprenyl-pyrophosphoryl-MurNAc-pentapeptide (lipid intermediate I) to form undecaprenyl-pyrophosphoryl-MurNAc-(pentapeptide)GlcNAc (lipid intermediate II). The chain is UDP-N-acetylglucosamine--N-acetylmuramyl-(pentapeptide) pyrophosphoryl-undecaprenol N-acetylglucosamine transferase from Tolumonas auensis (strain DSM 9187 / NBRC 110442 / TA 4).